We begin with the raw amino-acid sequence, 347 residues long: Spermidine/putrescine import ATP-binding protein PotA (347 aa).

Residues 6 to 236 enclose the ABC transporter domain; that stretch reads IEIKNVYKEF…PKNAFVAKFI (231 aa). 38-45 provides a ligand contact to ATP; that stretch reads GPSGCGKT.

This sequence belongs to the ABC transporter superfamily. Spermidine/putrescine importer (TC 3.A.1.11.1) family. The complex is composed of two ATP-binding proteins (PotA), two transmembrane proteins (PotB and PotC) and a solute-binding protein (PotD).

The protein resides in the cell membrane. The enzyme catalyses ATP + H2O + polyamine-[polyamine-binding protein]Side 1 = ADP + phosphate + polyamineSide 2 + [polyamine-binding protein]Side 1.. Its function is as follows. Part of the ABC transporter complex PotABCD involved in spermidine/putrescine import. Responsible for energy coupling to the transport system. This Clostridium novyi (strain NT) protein is Spermidine/putrescine import ATP-binding protein PotA.